The following is a 386-amino-acid chain: Probable mannan endo-1,4-beta-mannosidase A (386 aa).

The signal sequence occupies residues 1–21 (MKLNPSLLTAAGLVSAQLASA). Residues W95 and N207 each coordinate substrate. The Proton donor role is filled by E208. Y283 provides a ligand contact to substrate. E316 acts as the Nucleophile in catalysis. The N-linked (GlcNAc...) asparagine glycan is linked to N336. W346 lines the substrate pocket.

The protein belongs to the glycosyl hydrolase 5 (cellulase A) family.

The protein resides in the secreted. The catalysed reaction is Random hydrolysis of (1-&gt;4)-beta-D-mannosidic linkages in mannans, galactomannans and glucomannans.. In terms of biological role, endo-1,4-mannanase, a crucial enzyme for depolymerization of seed galactomannans and wood galactoglucomannans. The protein is Probable mannan endo-1,4-beta-mannosidase A (manA) of Aspergillus oryzae (strain ATCC 42149 / RIB 40) (Yellow koji mold).